The chain runs to 379 residues: MRVIGLMSGTSVDGIDAALVEIQGEADAIEIELLGFTTYSYPSKLREKILAVCAGEKLSALEFAALDDEIAHSFATAARQLQERYGKAELIGSHGQTIFHRPPNGNLGLSWQLGRGEAIAQQTKLKTVSNFRRADLAAGGQGAPLVPKVDAYLLADPTKHRCIQNLGGIGNVTYLPPKNQTDWENYVIGWDTGPGNVLLDLAIQKLTNGAQAYDQDGIWASQGTPHLDLVERWLADPFIEQLPPKSTGREYFGVDFLEQCWRDAQDLQLSEADWLASLTEFTALTVQRNYELFLPQLPDEIFLCGGGCRNSYLRKRLQAAFGNQIPVRSTDDLGLNHDAKEAIAFAVLAYWRIKEFPGNLPKVTGAPCPVLLGEIHCPY.

Residue 9-16 (GTSVDGID) participates in ATP binding.

The protein belongs to the anhydro-N-acetylmuramic acid kinase family.

The catalysed reaction is 1,6-anhydro-N-acetyl-beta-muramate + ATP + H2O = N-acetyl-D-muramate 6-phosphate + ADP + H(+). The protein operates within amino-sugar metabolism; 1,6-anhydro-N-acetylmuramate degradation. It functions in the pathway cell wall biogenesis; peptidoglycan recycling. Functionally, catalyzes the specific phosphorylation of 1,6-anhydro-N-acetylmuramic acid (anhMurNAc) with the simultaneous cleavage of the 1,6-anhydro ring, generating MurNAc-6-P. Is required for the utilization of anhMurNAc either imported from the medium or derived from its own cell wall murein, and thus plays a role in cell wall recycling. This Picosynechococcus sp. (strain ATCC 27264 / PCC 7002 / PR-6) (Agmenellum quadruplicatum) protein is Anhydro-N-acetylmuramic acid kinase.